Here is a 61-residue protein sequence, read N- to C-terminus: Translational regulator CsrA (61 aa).

The protein belongs to the CsrA/RsmA family. As to quaternary structure, homodimer; the beta-strands of each monomer intercalate to form a hydrophobic core, while the alpha-helices form wings that extend away from the core.

It localises to the cytoplasm. In terms of biological role, a key translational regulator that binds mRNA to regulate translation initiation and/or mRNA stability. Mediates global changes in gene expression, shifting from rapid growth to stress survival by linking envelope stress, the stringent response and the catabolite repression systems. Usually binds in the 5'-UTR; binding at or near the Shine-Dalgarno sequence prevents ribosome-binding, repressing translation, binding elsewhere in the 5'-UTR can activate translation and/or stabilize the mRNA. Its function is antagonized by small RNA(s). This is Translational regulator CsrA from Mannheimia succiniciproducens (strain KCTC 0769BP / MBEL55E).